A 450-amino-acid chain; its full sequence is Probable glucan endo-1,3-beta-glucosidase eglC (450 aa).

The N-terminal stretch at 1-18 (MQFTHLVALALALATSEA) is a signal peptide. E128 (proton donor) is an active-site residue. N-linked (GlcNAc...) asparagine glycosylation occurs at N183. The active-site Nucleophile is E239. N-linked (GlcNAc...) asparagine glycosylation is found at N362 and N368. Composition is skewed to low complexity over residues 377–395 (SSAI…SGSS) and 405–420 (ASGQ…SAPS). A disordered region spans residues 377 to 420 (SSAISGSSSGSAAGSSGSSGSSGSGASGASGQSSSSTGSSSAPS). A lipid anchor (GPI-anchor amidated asparagine) is attached at N427. A propeptide spans 428–450 (AASGLSGSICGAVVAVCLALAAL) (removed in mature form).

It belongs to the glycosyl hydrolase 17 family. In terms of processing, the GPI-anchor is attached to the protein in the endoplasmic reticulum and serves to target the protein to the cell surface. There, the glucosamine-inositol phospholipid moiety is cleaved off and the GPI-modified mannoprotein is covalently attached via its lipidless GPI glycan remnant to the 1,6-beta-glucan of the outer cell wall layer.

It localises to the cell membrane. The protein resides in the secreted. Its subcellular location is the cell wall. The catalysed reaction is Hydrolysis of (1-&gt;3)-beta-D-glucosidic linkages in (1-&gt;3)-beta-D-glucans.. Its function is as follows. Glucanases play a role in cell expansion during growth, in cell-cell fusion during mating, and in spore release during sporulation. This enzyme may be involved in beta-glucan degradation and also function biosynthetically as a transglycosylase. In Aspergillus fumigatus (strain CBS 144.89 / FGSC A1163 / CEA10) (Neosartorya fumigata), this protein is Probable glucan endo-1,3-beta-glucosidase eglC (eglC).